We begin with the raw amino-acid sequence, 275 residues long: Transmembrane protein 45A (275 aa).

The next 5 helical transmembrane spans lie at 7 to 27 (HALP…KSIL), 51 to 71 (ILEG…EQFI), 100 to 120 (FFFG…SLPV), 150 to 170 (IFVH…AFLE), and 218 to 238 (ILFL…IVGM).

The protein belongs to the TMEM45 family.

Its subcellular location is the membrane. This is Transmembrane protein 45A (TMEM45A) from Homo sapiens (Human).